Here is a 421-residue protein sequence, read N- to C-terminus: Glucan 1,3-beta-glucosidase (421 aa).

Residues 1–15 (MKLTKLVALAGAALA) form the signal peptide. The Proton donor role is filled by Glu213. 2 disulfide bridges follow: Cys296–Cys419 and Cys321–Cys347. Glu313 (nucleophile) is an active-site residue.

The protein belongs to the glycosyl hydrolase 5 (cellulase A) family.

It localises to the secreted. It catalyses the reaction Successive hydrolysis of beta-D-glucose units from the non-reducing ends of (1-&gt;3)-beta-D-glucans, releasing alpha-glucose.. The chain is Glucan 1,3-beta-glucosidase (EXG1) from Yarrowia lipolytica (strain CLIB 122 / E 150) (Yeast).